The chain runs to 1507 residues: Lhr helicase/ probable uracil glycosylase (1507 aa).

The lhr-Core stretch occupies residues 1–856 (MTTNGADPLG…ASLLFGYVGA (856 aa)). F24, Q31, K54, and T55 together coordinate ATP. Residues 35 to 226 (WSAISEGNNT…FLSGQAPTTI (192 aa)) form the Helicase ATP-binding domain. Residues R122, R131, T145, S148, and M152 each coordinate ssDNA. Residues D170 and E171 each coordinate ATP. Positions 170–173 (DEVH) match the DEAH box motif. The ssDNA site is built by S253, W255, and R279. The Helicase C-terminal domain occupies 257–451 (DVEERIVDLV…VLAQHTVAVA (195 aa)). ATP is bound by residues I377, R394, and H397. Positions 410, 518, 519, 528, 597, 600, and 777 each coordinate ssDNA. Residues 436-529 (PANPLDVLAQ…LAVTSGGAIP (94 aa)) are WH domain. The interval 530 to 856 (DRGMFTVYLA…ASLLFGYVGA (327 aa)) is domain 4. A CTD region spans residues 857–1507 (FMYEGDSPLA…SRTPRGLRLR (651 aa)).

It belongs to the Lhr helicase family. In terms of assembly, monomer. Homooligomerizes, possibly a homotetramer. Ca(2+) serves as cofactor.

It carries out the reaction Couples ATP hydrolysis with the unwinding of duplex DNA by translocating in the 3'-5' direction.. It catalyses the reaction ATP + H2O = ADP + phosphate + H(+). The catalysed reaction is Hydrolyzes single-stranded DNA or mismatched double-stranded DNA and polynucleotides, releasing free uracil.. Its function is as follows. A 3'-5' helicase involved in repair of at least 3 types of DNA cross-links, mitomycin C (MMC), cisplatin, and psoralen-UVA. Translocates 3'-to-5' on single-stranded (ss)DNA, unwinding any encountered duplex nucleic acid. A 3'-ssDNA loading strand of at least 15 nucleotides is required for helicase activity. An RNA:DNA hybrid with a 3'-ssDNA loading strand is an 8-fold better helicase substrate than 3'-tailed double-stranded (ds)DNA; substrates where the helicase loads on a 3'-ssRNA tail (DNA:RNA and RNA:RNA) are not unwound. Only (d)ATP is hydrolyzed by the protein, which has no ATPase activity in the absence of ssDNA or ssRNA. Arg-279 and Trp-597 are needed to couple ATP hydrolysis to mechanical work; a salt bridge between Arg-280 and Glu-550 closes a clamp around the ssDNA that is not large enough for dsDNA, while Ile-528 wedges between bases of the loading strand. Excises uracil residues from ssDNA. Uracil residues in DNA can arise as a result of misincorporation of dUMP residues by DNA polymerase or due to deamination of cytosine. The protein is Lhr helicase/ probable uracil glycosylase of Mycolicibacterium smegmatis (strain ATCC 700084 / mc(2)155) (Mycobacterium smegmatis).